The primary structure comprises 319 residues: Phospho-N-acetylmuramoyl-pentapeptide-transferase (319 aa).

The next 9 helical transmembrane spans lie at 5–25, 51–71, 79–99, 119–139, 149–169, 173–193, 197–217, 224–246, and 299–319; these read LIAF…LIIW, TMGG…ICAY, VWIL…DDGL, LLVA…FALY, VVLF…AVNL, LDGL…WLAF, NFGV…FFMF, IFMG…IFLG, and VDLV…MIWG.

Belongs to the glycosyltransferase 4 family. MraY subfamily. Mg(2+) is required as a cofactor.

It localises to the cell membrane. The catalysed reaction is UDP-N-acetyl-alpha-D-muramoyl-L-alanyl-gamma-D-glutamyl-L-lysyl-D-alanyl-D-alanine + di-trans,octa-cis-undecaprenyl phosphate = Mur2Ac(oyl-L-Ala-gamma-D-Glu-L-Lys-D-Ala-D-Ala)-di-trans,octa-cis-undecaprenyl diphosphate + UMP. The protein operates within cell wall biogenesis; peptidoglycan biosynthesis. In terms of biological role, catalyzes the initial step of the lipid cycle reactions in the biosynthesis of the cell wall peptidoglycan: transfers peptidoglycan precursor phospho-MurNAc-pentapeptide from UDP-MurNAc-pentapeptide onto the lipid carrier undecaprenyl phosphate, yielding undecaprenyl-pyrophosphoryl-MurNAc-pentapeptide, known as lipid I. The sequence is that of Phospho-N-acetylmuramoyl-pentapeptide-transferase from Lactobacillus delbrueckii subsp. bulgaricus (strain ATCC BAA-365 / Lb-18).